Consider the following 611-residue polypeptide: Chaperone protein DnaK (611 aa).

At threonine 173 the chain carries Phosphothreonine; by autocatalysis. A compositionally biased stretch (low complexity) spans 577 to 592 (QAAAGQAEGAEGAQDA). The segment at 577–598 (QAAAGQAEGAEGAQDAGAKKDN) is disordered.

The protein belongs to the heat shock protein 70 family.

Acts as a chaperone. This is Chaperone protein DnaK from Bacillus anthracis (strain A0248).